The primary structure comprises 362 residues: MTTPLTFDNIRRAPKALLHDHLDGGLRPSTVLELAEQYGYEDLPAHDADGLATFFRTAAHSGSLVRYLEPFAHTVGVMQNPDALHRVARECVEDLAADNVVYAEVRFAPELHIDGGLSLDAVVDAVLAGFADGEKAAAADGRAITVRCLVTAMRHAARSREIAELAIRFRDKGVVGFDIAGAEAGYPPSRHLDAFEYMRSNNARFTIHAGEAFGLPSIHEAIAFCGADRLGHGVRIVDDIEIDADGNAKLGRLASLLRDKRIPFEMCPSSNVQTGAVASIAEHPFDRLARLRFRVTVNTDNRLMSDTSMSMEMLRLVEAFGYGWSDLERFTINAMKSAFIAFDERLAIIDEVIKPRYAVLVG.

Zn(2+)-binding residues include histidine 19 and histidine 21. Histidine 21, aspartate 23, and glycine 181 together coordinate substrate. Zn(2+) is bound at residue histidine 208. Glutamate 211 (proton donor) is an active-site residue. A Zn(2+)-binding site is contributed by aspartate 300.

Belongs to the metallo-dependent hydrolases superfamily. Adenosine and AMP deaminases family. Adenosine deaminase subfamily. Requires Zn(2+) as cofactor.

The enzyme catalyses adenosine + H2O + H(+) = inosine + NH4(+). The catalysed reaction is 2'-deoxyadenosine + H2O + H(+) = 2'-deoxyinosine + NH4(+). Its function is as follows. Catalyzes the hydrolytic deamination of adenosine and 2-deoxyadenosine. The protein is Adenosine deaminase of Mycolicibacterium vanbaalenii (strain DSM 7251 / JCM 13017 / BCRC 16820 / KCTC 9966 / NRRL B-24157 / PYR-1) (Mycobacterium vanbaalenii).